A 624-amino-acid polypeptide reads, in one-letter code: Poly(A)-specific ribonuclease PARN (624 aa).

A divalent metal cation is bound by residues aspartate 28 and glutamate 30. The R3H domain maps to 171–238 (KKFIDQVIEK…ERHIVISKVD (68 aa)). The residue at position 213 (lysine 213) is an N6-acetyllysine. Positions 285 and 375 each coordinate a divalent metal cation. Lysine 492 bears the N6-acetyllysine mark. Serine 523 carries the phosphoserine modification. A Phosphoserine; by MAPKAPK2 modification is found at serine 543. The disordered stretch occupies residues 551–612 (GKRTLSPDPR…ELSLAGSVSD (62 aa)). Acidic residues predominate over residues 567–579 (RESEEVSDSELEQ). Phosphoserine is present on residues serine 569, serine 573, and serine 575. The segment covering 592 to 601 (KKSKKLKRMK) has biased composition (basic residues). A phosphoserine mark is found at serine 605, serine 609, and serine 613.

It belongs to the CAF1 family. As to quaternary structure, homodimer. Found in a mRNA decay complex with RENT1, RENT2 and RENT3B. Interacts with KHSRP. Interacts with CELF1/CUGBP1. Interacts with ZC3HAV1 in an RNA-independent manner. Interacts with DHX36. Requires Mg(2+) as cofactor. Phosphorylation by MAPKAPK2, preventing GADD45A mRNA degradation after genotoxic stress.

It is found in the nucleus. It localises to the cytoplasm. The protein resides in the nucleolus. The catalysed reaction is Exonucleolytic cleavage of poly(A) to 5'-AMP.. In terms of biological role, 3'-exoribonuclease that has a preference for poly(A) tails of mRNAs, thereby efficiently degrading poly(A) tails. Exonucleolytic degradation of the poly(A) tail is often the first step in the decay of eukaryotic mRNAs and is also used to silence certain maternal mRNAs translationally during oocyte maturation and early embryonic development. Interacts with both the 3'-end poly(A) tail and the 5'-end cap structure during degradation, the interaction with the cap structure being required for an efficient degradation of poly(A) tails. Involved in nonsense-mediated mRNA decay, a critical process of selective degradation of mRNAs that contain premature stop codons. Also involved in degradation of inherently unstable mRNAs that contain AU-rich elements (AREs) in their 3'-UTR, possibly via its interaction with KHSRP. Probably mediates the removal of poly(A) tails of AREs mRNAs, which constitutes the first step of destabilization. Also able to recognize poly(A) tails of microRNAs such as MIR21 and H/ACA box snoRNAs (small nucleolar RNAs) leading to leading to microRNAs degradation or snoRNA increased stability. The polypeptide is Poly(A)-specific ribonuclease PARN (Parn) (Mus musculus (Mouse)).